The primary structure comprises 489 residues: Ataxin-10 homolog (489 aa).

It belongs to the ataxin-10 family.

It localises to the cytoplasm. May play a role in the regulation of cytokinesis. The chain is Ataxin-10 homolog (CTR86) from Debaryomyces hansenii (strain ATCC 36239 / CBS 767 / BCRC 21394 / JCM 1990 / NBRC 0083 / IGC 2968) (Yeast).